We begin with the raw amino-acid sequence, 620 residues long: 1-deoxy-D-xylulose-5-phosphate synthase (620 aa).

Residues His80 and 121-123 (GHS) each bind thiamine diphosphate. Asp152 contributes to the Mg(2+) binding site. Thiamine diphosphate-binding positions include 153–154 (GA), Asn181, Tyr288, and Glu370. Residue Asn181 participates in Mg(2+) binding.

The protein belongs to the transketolase family. DXPS subfamily. As to quaternary structure, homodimer. Mg(2+) serves as cofactor. It depends on thiamine diphosphate as a cofactor.

The catalysed reaction is D-glyceraldehyde 3-phosphate + pyruvate + H(+) = 1-deoxy-D-xylulose 5-phosphate + CO2. It functions in the pathway metabolic intermediate biosynthesis; 1-deoxy-D-xylulose 5-phosphate biosynthesis; 1-deoxy-D-xylulose 5-phosphate from D-glyceraldehyde 3-phosphate and pyruvate: step 1/1. In terms of biological role, catalyzes the acyloin condensation reaction between C atoms 2 and 3 of pyruvate and glyceraldehyde 3-phosphate to yield 1-deoxy-D-xylulose-5-phosphate (DXP). This Escherichia coli O139:H28 (strain E24377A / ETEC) protein is 1-deoxy-D-xylulose-5-phosphate synthase.